We begin with the raw amino-acid sequence, 241 residues long: Hybrid peroxiredoxin hyPrx5 (241 aa).

A Thioredoxin domain is found at 3–167; that stretch reads SMEGKKVPQV…MLKYLAPQHQ (165 aa). The Cysteine sulfenic acid (-SOH) intermediate; for peroxiredoxin activity role is filled by cysteine 49. One can recognise a Glutaredoxin domain in the interval 170–241; sequence ESISIFTKPG…GSDDLEKYFA (72 aa). The cysteines at positions 180 and 183 are disulfide-linked.

The protein in the N-terminal section; belongs to the peroxiredoxin family. Prx5 subfamily. In the C-terminal section; belongs to the glutaredoxin family. As to quaternary structure, homotetramer; interconnecting Prx and Grx domains of different monomers.

It catalyses the reaction a hydroperoxide + 2 glutathione = an alcohol + glutathione disulfide + H2O. Functionally, thiol-specific peroxidase that catalyzes the reduction of hydrogen peroxide and organic hydroperoxides to water and alcohols, respectively. Plays a role in cell protection against oxidative stress by detoxifying peroxides. In Haemophilus influenzae (strain ATCC 51907 / DSM 11121 / KW20 / Rd), this protein is Hybrid peroxiredoxin hyPrx5 (PGdx).